The following is a 462-amino-acid chain: uncharacterized protein (462 aa).

Asp-12, His-14, Asp-48, Asn-81, His-179, and His-202 together coordinate a divalent metal cation. Residues 258–291 adopt a coiled-coil conformation; that stretch reads ESAETKAFLNEKEREAEEKLSDAVAELAQDAEVK.

The protein belongs to the metallophosphoesterase superfamily. It depends on a divalent metal cation as a cofactor.

This is an uncharacterized protein from Bacillus subtilis (strain 168).